We begin with the raw amino-acid sequence, 509 residues long: Maturase K (509 aa).

The protein belongs to the intron maturase 2 family. MatK subfamily.

Its subcellular location is the plastid. It localises to the chloroplast. Its function is as follows. Usually encoded in the trnK tRNA gene intron. Probably assists in splicing its own and other chloroplast group II introns. This is Maturase K from Chamaecyparis obtusa (Hinoki false-cypress).